Here is a 369-residue protein sequence, read N- to C-terminus: MAVSLPLVFTAPRRGMPPKHLADLDSTERREAVKELGLPGFRADQLARQYYARLEADPEKMTDLPAAVREQVGAALFPTLLTAVKHLACDGGDTRKTLWKANDGTLLESVLMRYPDRATLCISSQAGCGMACPFCATGQGGLQRNLSTAEIVDQVRAAAAALRDGDVHGGPGRLSNVVFMGMGEPLANYKRVVAAVRRITSPAPDGLGLSQRSVTVSTVGLAPAIRKLADEDLSVTLAVSLHTPDDELRDTLVPVNNRWSVAEVLDAARYYADKSGRRVSIEYALIRDVNDQPWRADMLGKKLRKALGPLVHVNLIPLNPTPGSEWDASPKPVEKEFVRRVLAQGVSCTVRDTRGQEIAAACGQLAAEN.

The active-site Proton acceptor is the Glu-108. The Radical SAM core domain maps to 114–351 (YPDRATLCIS…LAQGVSCTVR (238 aa)). Residues Cys-121 and Cys-362 are joined by a disulfide bond. Residues Cys-128, Cys-132, and Cys-135 each coordinate [4Fe-4S] cluster. S-adenosyl-L-methionine-binding positions include 183–184 (GE), Ser-217, 240–242 (SLH), and Asn-319. The active-site S-methylcysteine intermediate is Cys-362.

The protein belongs to the radical SAM superfamily. RlmN family. Requires [4Fe-4S] cluster as cofactor.

The protein resides in the cytoplasm. It catalyses the reaction adenosine(2503) in 23S rRNA + 2 reduced [2Fe-2S]-[ferredoxin] + 2 S-adenosyl-L-methionine = 2-methyladenosine(2503) in 23S rRNA + 5'-deoxyadenosine + L-methionine + 2 oxidized [2Fe-2S]-[ferredoxin] + S-adenosyl-L-homocysteine. It carries out the reaction adenosine(37) in tRNA + 2 reduced [2Fe-2S]-[ferredoxin] + 2 S-adenosyl-L-methionine = 2-methyladenosine(37) in tRNA + 5'-deoxyadenosine + L-methionine + 2 oxidized [2Fe-2S]-[ferredoxin] + S-adenosyl-L-homocysteine. Functionally, specifically methylates position 2 of adenine 2503 in 23S rRNA and position 2 of adenine 37 in tRNAs. The sequence is that of Probable dual-specificity RNA methyltransferase RlmN from Rhodococcus opacus (strain B4).